Here is a 192-residue protein sequence, read N- to C-terminus: Putative inactive ribonuclease 11 (192 aa).

Residues 1 to 15 (MAVFLLLLALGLLLA) form the signal peptide. The disordered stretch occupies residues 21–54 (RMKGTTEQFSQEEMQPAAKQTLEESANSTLSDKN). Polar residues predominate over residues 43-54 (EESANSTLSDKN). Asparagine 47 and asparagine 104 each carry an N-linked (GlcNAc...) asparagine glycan.

Belongs to the pancreatic ribonuclease family.

The protein resides in the secreted. In Mus musculus (Mouse), this protein is Putative inactive ribonuclease 11 (Rnase11).